A 78-amino-acid chain; its full sequence is Large ribosomal subunit protein bL28 (78 aa).

This sequence belongs to the bacterial ribosomal protein bL28 family.

The chain is Large ribosomal subunit protein bL28 from Thiobacillus denitrificans (strain ATCC 25259 / T1).